The chain runs to 258 residues: Imidazole glycerol phosphate synthase subunit HisF (258 aa).

Active-site residues include Asp-11 and Asp-130.

Belongs to the HisA/HisF family. In terms of assembly, heterodimer of HisH and HisF.

Its subcellular location is the cytoplasm. It carries out the reaction 5-[(5-phospho-1-deoxy-D-ribulos-1-ylimino)methylamino]-1-(5-phospho-beta-D-ribosyl)imidazole-4-carboxamide + L-glutamine = D-erythro-1-(imidazol-4-yl)glycerol 3-phosphate + 5-amino-1-(5-phospho-beta-D-ribosyl)imidazole-4-carboxamide + L-glutamate + H(+). The protein operates within amino-acid biosynthesis; L-histidine biosynthesis; L-histidine from 5-phospho-alpha-D-ribose 1-diphosphate: step 5/9. In terms of biological role, IGPS catalyzes the conversion of PRFAR and glutamine to IGP, AICAR and glutamate. The HisF subunit catalyzes the cyclization activity that produces IGP and AICAR from PRFAR using the ammonia provided by the HisH subunit. The polypeptide is Imidazole glycerol phosphate synthase subunit HisF (Gluconacetobacter diazotrophicus (strain ATCC 49037 / DSM 5601 / CCUG 37298 / CIP 103539 / LMG 7603 / PAl5)).